The chain runs to 623 residues: Putative ABC transporter ATP-binding protein MG014 homolog (623 aa).

Residues 16–325 (LILAPLFTFA…YIVLGLILTS (310 aa)) form the ABC transmembrane type-1 domain. 6 helical membrane passes run 27–47 (IIID…VFSI), 86–106 (VILL…CASI), 157–177 (FLRL…FAIA), 180–200 (SDMS…IGIL), 266–286 (NIPF…LLVF), and 307–327 (IFAF…TSLT). Positions 365 to 611 (LEFKNVAFGL…CDIYVKMKQA (247 aa)) constitute an ABC transporter domain. Position 400–407 (400–407 (GPTGSGKS)) interacts with ATP.

This sequence belongs to the ABC transporter superfamily.

It is found in the cell membrane. The protein is Putative ABC transporter ATP-binding protein MG014 homolog of Mycoplasma pneumoniae (strain ATCC 29342 / M129 / Subtype 1) (Mycoplasmoides pneumoniae).